Consider the following 89-residue polypeptide: Small membrane A-kinase anchor protein (89 aa).

Residues 1–29 (MGCMKSKRRDPTQNSDSSEKVDGKPGKHG) are disordered. The N-myristoyl glycine moiety is linked to residue G2. Positions 17-29 (SSEKVDGKPGKHG) are enriched in basic and acidic residues.

The protein belongs to the small membrane AKAP family. May be palmitoylated at Cys-3.

It is found in the cell membrane. Binds to type I regulatory subunits of protein kinase A and may anchor/target them to the plasma membrane. The protein is Small membrane A-kinase anchor protein of Danio rerio (Zebrafish).